The sequence spans 271 residues: 3-methyl-2-oxobutanoate hydroxymethyltransferase (271 aa).

Positions 51 and 90 each coordinate Mg(2+). 3-methyl-2-oxobutanoate-binding positions include 51 to 52 (DS), Asp90, and Lys119. Glu121 provides a ligand contact to Mg(2+). Glu188 functions as the Proton acceptor in the catalytic mechanism.

Belongs to the PanB family. As to quaternary structure, homodecamer; pentamer of dimers. The cofactor is Mg(2+).

It is found in the cytoplasm. The enzyme catalyses 3-methyl-2-oxobutanoate + (6R)-5,10-methylene-5,6,7,8-tetrahydrofolate + H2O = 2-dehydropantoate + (6S)-5,6,7,8-tetrahydrofolate. It participates in cofactor biosynthesis; (R)-pantothenate biosynthesis; (R)-pantoate from 3-methyl-2-oxobutanoate: step 1/2. Catalyzes the reversible reaction in which hydroxymethyl group from 5,10-methylenetetrahydrofolate is transferred onto alpha-ketoisovalerate to form ketopantoate. In Aromatoleum aromaticum (strain DSM 19018 / LMG 30748 / EbN1) (Azoarcus sp. (strain EbN1)), this protein is 3-methyl-2-oxobutanoate hydroxymethyltransferase.